An 853-amino-acid chain; its full sequence is Histone-lysine N-methyltransferase PRDM9 (853 aa).

Residues 83-197 enclose the SET domain; the sequence is QGLVIGRSSI…PGQEFRVWYA (115 aa). Substrate-binding positions include 127–133 and tyrosine 196; that span reads DSANSWV. The C2H2-type 1 zinc finger occupies 230–253; the sequence is CPCPFCHYSFPTLVYLHAHVKRTH. Cysteine 235 lines the Zn(2+) pocket. Residue 275 to 277 participates in S-adenosyl-L-methionine binding; it reads TEV. A compositionally biased stretch (polar residues) spans 291-314; sequence QTQPVTESPQEQISTQNGQPIHQT. Residues 291–322 form a disordered region; sequence QTQPVTESPQEQISTQNGQPIHQTENSDEPDA. 3 C2H2-type zinc fingers span residues 337–360, 366–388, and 405–428; these read HACV…RTIH, YCCS…QHTH, and YPCT…KRHH. 341 to 342 provides a ligand contact to S-adenosyl-L-methionine; the sequence is DC. Residues cysteine 407, cysteine 410, histidine 423, and histidine 428 each contribute to the Zn(2+) site. The interval 447-496 is disordered; sequence EDHTEVCFDKQDPNYEPPSRGRKSTKNSLKGRGCPKKVAVGRPRGRPPKN. A compositionally biased stretch (basic and acidic residues) spans 450–459; sequence TEVCFDKQDP. The segment at 508-528 adopts a C2H2-type 5; degenerate zinc-finger fold; that stretch reads PICTNCEQSFSDLETLKTHQC. The C2H2-type 6; degenerate zinc finger occupies 547–569; sequence YICGECIRAFSNLDLLKAHECIQ. 3 C2H2-type zinc fingers span residues 575–598, 604–626, and 644–666; these read YCCP…RTIH, YCCT…QQSH, and FPCA…IRRH. A C2H2-type 10; degenerate zinc finger spans residues 689-711; that stretch reads HSCSQCCKSFSTIKGFKNHSCFK. 5 consecutive C2H2-type zinc fingers follow at residues 717-739, 745-767, 773-795, 801-823, and 829-852; these read YLCP…QRIH, YTCS…LRTH, FLCS…EQKH, CQCP…QQLH, and FPCT…QKMH. Positions 747, 750, 763, 767, 775, 778, 791, 795, 803, 806, 819, 823, 831, 834, and 847 each coordinate Zn(2+). The tract at residues 755 to 845 is DNA-binding; it reads VHSGQLNVHL…KSFTRRYHLT (91 aa).

This sequence belongs to the class V-like SAM-binding methyltransferase superfamily. In terms of assembly, homodimer. In terms of processing, mono-methylated; automethylated. Tri-methylated; automethylated.

The protein resides in the nucleus. It is found in the chromosome. The enzyme catalyses L-lysyl-[protein] + S-adenosyl-L-methionine = N(6)-methyl-L-lysyl-[protein] + S-adenosyl-L-homocysteine + H(+). The catalysed reaction is N(6)-methyl-L-lysyl-[protein] + S-adenosyl-L-methionine = N(6),N(6)-dimethyl-L-lysyl-[protein] + S-adenosyl-L-homocysteine + H(+). It catalyses the reaction L-lysyl(4)-[histone H3] + 3 S-adenosyl-L-methionine = N(6),N(6),N(6)-trimethyl-L-lysyl(4)-[histone H3] + 3 S-adenosyl-L-homocysteine + 3 H(+). It carries out the reaction L-lysyl(36)-[histone H3] + 3 S-adenosyl-L-methionine = N(6),N(6),N(6)-trimethyl-L-lysyl(36)-[histone H3] + 3 S-adenosyl-L-homocysteine + 3 H(+). The enzyme catalyses L-lysyl(9)-[histone H3] + 3 S-adenosyl-L-methionine = N(6),N(6),N(6)-trimethyl-L-lysyl(9)-[histone H3] + 3 S-adenosyl-L-homocysteine + 3 H(+). The catalysed reaction is L-lysyl(20)-[histone H4] + S-adenosyl-L-methionine = N(6)-methyl-L-lysyl(20)-[histone H4] + S-adenosyl-L-homocysteine + H(+). It catalyses the reaction N(6)-methyl-L-lysyl(20)-[histone H4] + S-adenosyl-L-methionine = N(6),N(6)-dimethyl-L-lysyl(20)-[histone H4] + S-adenosyl-L-homocysteine + H(+). Functionally, histone methyltransferase that sequentially mono-, di-, and tri-methylates both 'Lys-4' (H3K4) and 'Lys-36' (H3K36) of histone H3 to produce respectively trimethylated 'Lys-4' (H3K4me3) and trimethylated 'Lys-36' (H3K36me3) histone H3 and plays a key role in meiotic prophase by determining hotspot localization thereby promoting meiotic recombination. Can also methylate all four core histones with H3 being the best substrate and the most highly modified. Is also able, on one hand, to mono and di-methylate H4K20 and on other hand to trimethylate H3K9 with the di-methylated H3K9 as the best substrate. During meiotic prophase, binds specific DNA sequences through its zinc finger domains thereby determining hotspot localization where it promotes local H3K4me3 and H3K36me3 enrichment on the same nucleosomes through its histone methyltransferase activity. Thereby promotes double-stranded breaks (DSB) formation, at this subset of PRDM9-binding sites, that initiates meiotic recombination for the proper meiotic progression. During meiotic progression hotspot-bound PRDM9 interacts with several complexes; in early leptonema binds CDYL and EHMT2 followed by EWSR1 and CXXC1 by the end of leptonema. EWSR1 joins PRDM9 with the chromosomal axis through REC8. In this way, controls the DSB repair pathway, pairing of homologous chromosomes and sex body formation. Moreover plays a central role in the transcriptional activation of genes during early meiotic prophase thanks to H3K4me3 and H3K36me3 enrichment that represents a specific tag for epigenetic transcriptional activation. In addition performs automethylation. Acetylation and phosphorylation of histone H3 attenuate or prevent histone H3 methylation. This chain is Histone-lysine N-methyltransferase PRDM9 (prdm9), found in Danio rerio (Zebrafish).